Consider the following 167-residue polypeptide: Small ribosomal subunit protein uS3m (167 aa).

Residues 1–35 constitute a mitochondrion transit peptide; the sequence is MAWSASVRGLGQRVLACSRELPGAWRTLHTSAVCA.

The protein belongs to the universal ribosomal protein uS3 family. In terms of assembly, component of the mitochondrial ribosome small subunit (28S) which comprises a 12S rRNA and about 30 distinct proteins.

It localises to the mitochondrion. The sequence is that of Small ribosomal subunit protein uS3m (Mrps24) from Mus musculus (Mouse).